We begin with the raw amino-acid sequence, 105 residues long: uncharacterized protein (105 aa).

Transmembrane regions (helical) follow at residues 10 to 30 (YVVFIISLIVLLIIFYVFKIG) and 48 to 68 (YPLAISLVIWVIWYFLLYPPS).

Its subcellular location is the membrane. This is an uncharacterized protein from Acanthamoeba polyphaga mimivirus (APMV).